Reading from the N-terminus, the 217-residue chain is MATVEPETTPTPNPPPAEEEKTESNQEVANPEHYIKHPLQNRWALWFFKNDKSKTWQANLRLISKFDTVEDFWALYNHIQLSSNLMPGCDYSLFKDGIEPMWEDEKNKRGGRWLITLNKQQRRSDLDRFWLETLLCLIGESFDDYSDDVCGAVVNVRAKGDKIAIWTTECENRDAVTHIGRVYKERLGLPPKIVIGYQSHADTATKSGSTTKNRFVV.

Residues 1-27 (MATVEPETTPTPNPPPAEEEKTESNQE) form a disordered region. Ala2 carries the post-translational modification N-acetylalanine. Thr22 is modified (phosphothreonine). The segment at 37–40 (HPLQ) is EIF4EBP1/2/3 binding. An mRNA-binding site is contributed by 56–57 (WQ). Residues 73-77 (WALYN) form an EIF4EBP1/2/3 binding region. 102–103 (WE) provides a ligand contact to mRNA. The tract at residues 132-139 (ETLLCLIG) is EIF4EBP1/2/3 binding. Residues 157-162 (RAKGDK) and 205-207 (TKS) each bind mRNA. Ser209 carries the post-translational modification Phosphoserine; by PKC and MKNK2.

This sequence belongs to the eukaryotic initiation factor 4E family. In terms of assembly, eIF4F is a multi-subunit complex, the composition of which varies with external and internal environmental conditions. It is composed of at least EIF4A, EIF4E and EIF4G1/EIF4G3. EIF4E is also known to interact with other partners. Interacts with EIF4ENIF1/4E-T; promotes recruitment to P-bodies and import into the nucleus. Hypophosphorylated EIF4EBP1, EIF4EBP2 and EIF4EBP3 compete with EIF4G1/EIF4G3 to interact with EIF4E; insulin stimulated MAP-kinase (MAPK1 and MAPK3) phosphorylation of EIF4EBP1 causes dissociation of the complex allowing EIF4G1/EIF4G3 to bind and consequent initiation of translation. Interacts mutually exclusive with EIF4A1 or EIF4A2. Interacts with NGDN and PIWIL2. Component of the CYFIP1-EIF4E-FMR1 complex composed of CYFIP, EIF4E and FMR1. Interacts directly with CYFIP1. Interacts with CLOCK. Binds to MKNK2 in nucleus. Interacts with LIMD1, WTIP and AJUBA. Interacts with APOBEC3G in an RNA-dependent manner. Interacts with LARP1. Interacts with METTL3. Interacts with RBM24; this interaction prevents EIF4E from binding to p53/TP53 mRNA and inhibits the assembly of translation initiation complex. Interacts with DDX3X; interaction is direct and in an RNA-independent manner; this interaction enhances EIF4E cap-binding ability and is required for the repression of cap-dependent translation and the increase of IRES-mediated translation. DDX3X competes with EIF4G1 for interaction with EIF4E. Interacts with EIF4G1; which in a mutual exclusive interaction associates either with EIF1 or with EIF4E on a common binding site. Interacts with BTG4 and CNOT7. Interacts with LRPPRC (via N-terminus); the interaction promotes association of EIF4E with 4ESE-containing mRNAs. Interacts with mRNA cleavage enzyme CPSF3 and its cofactor CPSF1. Interacts (via RING-type zinc finger) with PML; the interaction results in conformational changes of both interacting proteins and reduces EIF4E affinity for the 5' m7G cap of mRNA, thus reducing EIF4E-mediated mRNA nuclear export. Interacts with homeobox protein HHEX/PRH; the interaction inhibits EIF4E-mediated mRNA nuclear export. Interacts with homeobox protein HOXA9; the interaction positively regulates EIF4E-mediated mRNA nuclear export. Interacts with homeobox protein EMX2. Phosphorylation increases the ability of the protein to bind to mRNA caps and to form the eIF4F complex. Phosphorylation also enhances its mRNA transport function. Phosphorylation at Ser-209 is not essential for protein synthesis.

It localises to the cytoplasm. Its subcellular location is the P-body. It is found in the stress granule. The protein localises to the nucleus. The protein resides in the nucleus speckle. It localises to the nuclear body. Functionally, acts in the cytoplasm to initiate and regulate protein synthesis and is required in the nucleus for export of a subset of mRNAs from the nucleus to the cytoplasm which promotes processes such as RNA capping, processing and splicing. Component of the protein complex eIF4F, which is involved in the recognition of the mRNA cap, ATP-dependent unwinding of 5'-terminal secondary structure and recruitment of mRNA to the ribosome. This protein recognizes and binds the 7-methylguanosine (m7G)-containing mRNA cap during an early step in the initiation of protein synthesis and facilitates ribosome binding by inducing the unwinding of the mRNAs secondary structures. Together with EIF4G1, antagonizes the scanning promoted by EIF1-EIF4G1 and is required for TISU translation, a process where the TISU element recognition makes scanning unnecessary. In addition to its role in translation initiation, also acts as a regulator of translation and stability in the cytoplasm. Component of the CYFIP1-EIF4E-FMR1 complex which binds to the mRNA cap and mediates translational repression: in the complex, EIF4E mediates the binding to the mRNA cap. Component of a multiprotein complex that sequesters and represses translation of proneurogenic factors during neurogenesis. In P-bodies, component of a complex that mediates the storage of translationally inactive mRNAs in the cytoplasm and prevents their degradation. May play an important role in spermatogenesis through translational regulation of stage-specific mRNAs during germ cell development. As well as its roles in translation, also involved in mRNA nucleocytoplasmic transport. Its role in mRNA export from the nucleus to the cytoplasm relies on its ability to bind the m7G cap of RNAs and on the presence of the 50-nucleotide EIF4E sensitivity element (4ESE) in the 3'UTR of sensitive transcripts. Interaction with the 4ESE is mediated by LRPPRC which binds simultaneously to both EIF4E and the 4ESE, thereby acting as a platform for assembly for the RNA export complex. EIF4E-dependent mRNA export is independent of ongoing protein or RNA synthesis and is also NFX1-independent but is XPO1-dependent with LRPPRC interacting with XPO1 to form an EIF4E-dependent mRNA export complex. Alters the composition of the cytoplasmic face of the nuclear pore to promote RNA export by reducing RANBP2 expression, relocalizing nucleoporin NUP214 and increasing expression of RANBP1 and RNA export factors DDX19 and GLE1. Promotes the nuclear export of cyclin CCND1 mRNA. Promotes the nuclear export of NOS2/iNOS mRNA. Promotes the nuclear export of MDM2 mRNA. Also promotes the export of additional mRNAs, including others involved in the cell cycle. In the nucleus, binds to capped splice factor-encoding mRNAs and stimulates their nuclear export to enhance splice factor production by increasing their cytoplasmic availability to the translation machinery. May also regulate splicing through interaction with the spliceosome in an RNA and m7G cap-dependent manner. Also binds to some pre-mRNAs and may play a role in their recruitment to the spliceosome. Promotes steady-state capping of a subset of coding and non-coding RNAs by mediating nuclear export of capping machinery mRNAs including RNMT, RNGTT and RAMAC to enhance their translation. Stimulates mRNA 3'-end processing by promoting the expression of several core cleavage complex factors required for mRNA cleavage and polyadenylation, and may also have a direct effect through its interaction with the CPSF3 cleavage enzyme. Rescues cells from apoptosis by promoting activation of serine/threonine-protein kinase AKT1 through mRNA export of NBS1 which potentiates AKT1 phosphorylation and also through mRNA export of AKT1 effectors, allowing for increased production of these proteins. This chain is Eukaryotic translation initiation factor 4E (EIF4E), found in Oryctolagus cuniculus (Rabbit).